The sequence spans 785 residues: Mitochondrial intermediate peptidase (785 aa).

A mitochondrion-targeting transit peptide spans 1 to 26 (MLKVTTSRPWVCSRCVRRQVQSRRRL). The tract at residues 26–51 (LATASTQYRESRPVPVDNSAPGAKRD) is disordered. Residue His566 participates in Zn(2+) binding. Residue Glu567 is part of the active site. Zn(2+) is bound by residues His570 and His573.

This sequence belongs to the peptidase M3 family. Zn(2+) is required as a cofactor.

The protein resides in the mitochondrion matrix. The enzyme catalyses Release of an N-terminal octapeptide as second stage of processing of some proteins imported into the mitochondrion.. In terms of biological role, cleaves proteins, imported into the mitochondrion, to their mature size. While most mitochondrial precursor proteins are processed to the mature form in one step by mitochondrial processing peptidase (MPP), the sequential cleavage by MIP of an octapeptide after initial processing by MPP is a required step for a subgroup of nuclear-encoded precursor proteins destined for the matrix or the inner membrane. This is Mitochondrial intermediate peptidase (oct1) from Botryotinia fuckeliana (strain B05.10) (Noble rot fungus).